Reading from the N-terminus, the 65-residue chain is Large ribosomal subunit protein bL35 (65 aa).

Belongs to the bacterial ribosomal protein bL35 family.

This Nostoc sp. (strain PCC 7120 / SAG 25.82 / UTEX 2576) protein is Large ribosomal subunit protein bL35.